A 192-amino-acid chain; its full sequence is UPF0312 protein Psyr_0457 (192 aa).

A signal peptide spans 1–23 (MLKKSLAALALGTALLSAGQAMA).

It belongs to the UPF0312 family. Type 1 subfamily.

Its subcellular location is the periplasm. In Pseudomonas syringae pv. syringae (strain B728a), this protein is UPF0312 protein Psyr_0457.